The sequence spans 273 residues: Polyamine aminopropyltransferase (273 aa).

The PABS domain maps to 5 to 238 (ENWFSERYSD…GFWSFTIASE (234 aa)). Gln34 is a binding site for S-methyl-5'-thioadenosine. His65 and Asp90 together coordinate spermidine. Residues Glu109 and 140–141 (DG) contribute to the S-methyl-5'-thioadenosine site. Asp158 functions as the Proton acceptor in the catalytic mechanism. A spermidine-binding site is contributed by 158–161 (DSTD). Pro165 is a binding site for S-methyl-5'-thioadenosine.

Belongs to the spermidine/spermine synthase family. As to quaternary structure, homodimer or homotetramer.

It localises to the cytoplasm. It catalyses the reaction S-adenosyl 3-(methylsulfanyl)propylamine + putrescine = S-methyl-5'-thioadenosine + spermidine + H(+). It participates in amine and polyamine biosynthesis; spermidine biosynthesis; spermidine from putrescine: step 1/1. In terms of biological role, catalyzes the irreversible transfer of a propylamine group from the amino donor S-adenosylmethioninamine (decarboxy-AdoMet) to putrescine (1,4-diaminobutane) to yield spermidine. This Thermoplasma volcanium (strain ATCC 51530 / DSM 4299 / JCM 9571 / NBRC 15438 / GSS1) protein is Polyamine aminopropyltransferase.